A 92-amino-acid chain; its full sequence is Acylphosphatase (92 aa).

An Acylphosphatase-like domain is found at glycine 5–histidine 92. Active-site residues include arginine 20 and asparagine 38.

The protein belongs to the acylphosphatase family.

It catalyses the reaction an acyl phosphate + H2O = a carboxylate + phosphate + H(+). This Photorhabdus laumondii subsp. laumondii (strain DSM 15139 / CIP 105565 / TT01) (Photorhabdus luminescens subsp. laumondii) protein is Acylphosphatase (acyP).